The chain runs to 34 residues: Photosystem I reaction center subunit XII (34 aa).

Residues 4 to 24 (VLSAPEVFIALVVAAHAAVLA) form a helical membrane-spanning segment.

Belongs to the PsaM family.

It is found in the cellular thylakoid membrane. In Synechococcus sp. (strain CC9605), this protein is Photosystem I reaction center subunit XII.